We begin with the raw amino-acid sequence, 141 residues long: Large ribosomal subunit protein uL11 (141 aa).

Belongs to the universal ribosomal protein uL11 family. Part of the ribosomal stalk of the 50S ribosomal subunit. Interacts with L10 and the large rRNA to form the base of the stalk. L10 forms an elongated spine to which L12 dimers bind in a sequential fashion forming a multimeric L10(L12)X complex. One or more lysine residues are methylated.

Forms part of the ribosomal stalk which helps the ribosome interact with GTP-bound translation factors. In Moorella thermoacetica (strain ATCC 39073 / JCM 9320), this protein is Large ribosomal subunit protein uL11.